The sequence spans 411 residues: Immunity-related GTPase family M protein (411 aa).

Positions 1–21 (MKPSHKSCEAAPLLPKMPETS) are disordered. Residues 77-253 (IPVSIFVTGD…PELRNTLQTD (177 aa)) enclose the IRG-type G domain. GTP is bound by residues 86–93 (DSGNGMSS), 111–115 (TGVVR), and 193–195 (KLD). Phosphoserine is present on Ser204. 234 to 236 (SNL) lines the GTP pocket. A Glycyl lysine isopeptide (Lys-Gly) (interchain with G-Cter in ubiquitin) cross-link involves residue Lys272. The tract at residues 352-376 (KLRLMTCTTVNALFCLFKFLPCLCH) is alpha-K amphipathic helix.

It belongs to the TRAFAC class dynamin-like GTPase superfamily. IRG family. Interacts with ULK1; promoting the coassembly of ULK1 and BECN1. Interacts with BECN1; enhancing BECN1-interacting partners and influencing the composition of the BECN1 complex. Interacts with ATG16L1. Interacts with NOD2; promoting Irgm 'Lys-63'-linked polyubiquitination, which is required for interactions with the core autophagy factors. Interacts with STX17; promoting STX17 recruitment to autophagosomes. Interacts with ATG8 proteins (GABARAP, GABARAPL1, GABARAPL2, MAP1LC3A, MAP1LC3B and MAP1LC3C); promoting STX17 recruitment to autophagosomes. Interacts with TFEB; promoting association between TFEB and PPP3CB and TFEB dephosphorylation. Interacts with PPP3CB; promoting association between TFEB and PPP3CB and TFEB dephosphorylation. Interacts with NLRP3; preventing NLRP3 inflammasome assembly and promoting SQSTM1/p62-dependent autophagic degradation of NLRP3. Interacts with CGAS; promoting SQSTM1/p62-dependent autophagic degradation of CGAS. Interacts with RIGI/RIG-I; promoting SQSTM1/p62-dependent autophagic degradation of RIGI/RIG-I. Interacts with NOD1; promoting SQSTM1/p62-dependent autophagic degradation of RIGI/RIG-I. Interacts with NOD2; promoting SQSTM1/p62-dependent autophagic degradation of RIGI/RIG-I. Interacts with RIPK2; promoting SQSTM1/p62-dependent autophagic degradation of RIGI/RIG-I. Interacts with PIK3CA. Palmitoylated on C-terminal Cys residues. Palmitoylation, together with the alpha-K amphipathic helix, which binds phosphatidylinositol, mediate binding to membranes. In terms of processing, ubiquitinated via 'Lys-63'-linked polyubiquitination in a NOD2-dependent process. 'Lys-63'-linked polyubiquitination is required for interactions with the core autophagy factors. Ubiquitination at Lys-272 by the DCX(WDR77) complex, also named CLR4(WDR77) complex, in intestinal cells, leading to its degradation by the proteasome.

The protein resides in the golgi apparatus membrane. The protein localises to the cell membrane. Its subcellular location is the cytoplasmic vesicle. It localises to the phagosome membrane. It is found in the autophagosome membrane. The protein resides in the lysosome membrane. The protein localises to the late endosome membrane. Its subcellular location is the mitochondrion membrane. It localises to the cell projection. It is found in the phagocytic cup. The enzyme catalyses GTP + H2O = GDP + phosphate + H(+). Immunity-related GTPase that plays important roles in innate immunity and inflammatory response. Acts as a dynamin-like protein that binds to intracellular membranes and promotes remodeling and trafficking of those membranes. Required for clearance of acute protozoan and bacterial infections by interacting with autophagy and lysosome regulatory proteins, thereby promoting the fusion of phagosomes with lysosomes for efficient degradation of cargo including microbes. Regulates selective autophagy, including xenophagy and mitophagy, both directly and indirectly. Directly regulates autophagy by acting as a molecular adapter that promotes the coassembly of the core autophagy machinery to mediate antimicrobial defense: Irgm (1) activates AMPK, which in turn phosphorylates ULK1 and BECN1 to induce autophagy, (2) promotes the coassembly of ULK1 and BECN1, enhancing BECN1-interacting partners and (3) influences the composition of the BECN1 complex, by competing with the negative regulators BCL2 and RUBCN, to trigger autophagy. Also activates autophagy by promoting recruitment of STX17 to autophagosomes. In collaboration with ATG8 proteins, regulate lysosomal biogenesis, a fundamental process for any autophagic pathway, by promoting TFEB dephosphorylation. Also modulates autophagy by assisting with autophagosome formation and preventing lysosomal deacidification. Regulates autophagy by affecting mitochondrial fusion and fission. Also involved in M1 macrophage activation for the production of proinflammatory cytokines. While activating autophagy, acts as a key negative regulator of the inflammatory and interferon responses both by (1) promoting mitophagy and (2) mediating autophagy-dependent degradation of effectors of the inflammatory response. Promotes degradation of damaged and IFNG/IFN-gamma-stressed mitochondria via mitophagy, preventing cytosolic release of ligands that activate inflammation. Negatively regulates interferon-signaling in hematopoietic stem cells, preserving hematopoietic stem cell number and function. Promotes expansion of activated CD4(+) T-cells by inhibiting IFNG/IFN-gamma signaling, thereby preventing Ifng-mediated cell death of CD4(+) T-cells. Acts as a suppressor of inflammation by promoting recruitment of inflammation effectors, such as CGAS, RIGI/RIG-I and NLRP3, to autophagosome membranes, leading to their SQSTM1/p62-dependent autophagic degradation. Also directly inhibits assembly of the NLRP3 inflammasome by preventing the association between NLRP3 and PYCARD. Acts as a negative regulator of antiviral innate immune response by suppressing the RIPK2-dependent pro-inflammatory response: mediates recruitment of RIPosomes, composed of RIPK2 and NOD1 or NOD2, to autophagosome membranes, promoting their SQSTM1/p62-dependent autophagic degradation. This Rattus norvegicus (Rat) protein is Immunity-related GTPase family M protein.